The following is a 298-amino-acid chain: MGDHAWSFLKDFLAGGVAAAVSKTAVAPIERVKLLLQVQHASKQISAEKQYKGIIDCVVRIPKEQGFLSFWRGNLANVIRYFPTQALNFAFKDKYKQLFLGGVDRHKQFWRYFAGNLASGGAAGATSLCFVYPLDFARTRLAADVGKGAAQREFHGLGDCIIKIFKSDGLRGLYQGFNVSVQGIIIYRAAYFGVYDTAKGMLPDPKNVHIFVSWMIAQSVTAVAGLVSYPFDTVRRRMMMQSGRKGADIMYTGTVDCWRKIAKDEGAKAFFKGAWSNVLRGMGGAFVLVLYDEIKKYV.

Topologically, residues 1–7 (MGDHAWS) are mitochondrial intermembrane. The residue at position 2 (Gly2) is an N-acetylglycine. One copy of the Solcar 1 repeat lies at 6 to 98 (WSFLKDFLAG…FAFKDKYKQL (93 aa)). Ser7 carries the post-translational modification Phosphoserine. Residues 8–37 (FLKDFLAGGVAAAVSKTAVAPIERVKLLLQ) traverse the membrane as a helical segment. Residues 38-74 (VQHASKQISAEKQYKGIIDCVVRIPKEQGFLSFWRGN) lie on the Mitochondrial matrix side of the membrane. At Lys52 the chain carries N6,N6,N6-trimethyllysine. Residues 75-99 (LANVIRYFPTQALNFAFKDKYKQLF) form a helical membrane-spanning segment. Arg80 and Lys92 together coordinate ADP. Topologically, residues 100-109 (LGGVDRHKQF) are mitochondrial intermembrane. The chain crosses the membrane as a helical span at residues 110–130 (WRYFAGNLASGGAAGATSLCF). Solcar repeat units follow at residues 111 to 201 (RYFA…AKGM) and 212 to 297 (VSWM…IKKY). The Mitochondrial matrix segment spans residues 131–178 (VYPLDFARTRLAADVGKGAAQREFHGLGDCIIKIFKSDGLRGLYQGFN). Lys147 carries the post-translational modification N6-succinyllysine. Cys160 is modified (S-nitrosocysteine). A helical membrane pass occupies residues 179 to 199 (VSVQGIIIYRAAYFGVYDTAK). Residues 200–210 (GMLPDPKNVHI) lie on the Mitochondrial intermembrane side of the membrane. The chain crosses the membrane as a helical span at residues 211-231 (FVSWMIAQSVTAVAGLVSYPF). The Mitochondrial matrix portion of the chain corresponds to 232-273 (DTVRRRMMMQSGRKGADIMYTGTVDCWRKIAKDEGAKAFFKG). Arg235 lines the ADP pocket. The segment at 235–240 (RRRMMM) is important for transport activity. Positions 235 to 240 (RRRMMM) match the Nucleotide carrier signature motif motif. N6-succinyllysine is present on residues Lys245 and Lys272. A helical membrane pass occupies residues 274-291 (AWSNVLRGMGGAFVLVLY). The Mitochondrial intermembrane portion of the chain corresponds to 292-298 (DEIKKYV).

This sequence belongs to the mitochondrial carrier (TC 2.A.29) family. Monomer. Found in a complex with ARL2, ARL2BP and SLC25A4/ANT1. Interacts with ARL2BP. Interacts with ARHGAP11B, thereby inhibiting the mitochondrial permeability transition pore (mPTP). Interacts with TIMM44; leading to inhibit the presequence translocase TIMM23, thereby promoting stabilization of PINK1. In terms of assembly, (Microbial infection) Interacts with HIV-1 Vpr. Post-translationally, under cell death induction, transglutaminated by TGM2. Transglutamination leads to formation of covalent cross-links between a glutamine and the epsilon-amino group of a lysine residue, forming polymers. Expressed in erythrocytes (at protein level).

It is found in the mitochondrion inner membrane. It localises to the membrane. The catalysed reaction is ADP(in) + ATP(out) = ADP(out) + ATP(in). It carries out the reaction H(+)(in) = H(+)(out). The matrix-open state (m-state) is inhibited by the membrane-permeable bongkrekic acid (BKA). The cytoplasmic-open state (c-state) is inhibited by the membrane-impermeable toxic inhibitor carboxyatractyloside (CATR). Proton transporter activity is inhibited by ADP:ATP antiporter activity. Its function is as follows. ADP:ATP antiporter that mediates import of ADP into the mitochondrial matrix for ATP synthesis, and export of ATP out to fuel the cell. Cycles between the cytoplasmic-open state (c-state) and the matrix-open state (m-state): operates by the alternating access mechanism with a single substrate-binding site intermittently exposed to either the cytosolic (c-state) or matrix (m-state) side of the inner mitochondrial membrane. In addition to its ADP:ATP antiporter activity, also involved in mitochondrial uncoupling and mitochondrial permeability transition pore (mPTP) activity. Plays a role in mitochondrial uncoupling by acting as a proton transporter: proton transport uncouples the proton flows via the electron transport chain and ATP synthase to reduce the efficiency of ATP production and cause mitochondrial thermogenesis. Proton transporter activity is inhibited by ADP:ATP antiporter activity, suggesting that SLC25A4/ANT1 acts as a master regulator of mitochondrial energy output by maintaining a delicate balance between ATP production (ADP:ATP antiporter activity) and thermogenesis (proton transporter activity). Proton transporter activity requires free fatty acids as cofactor, but does not transport it. Also plays a key role in mPTP opening, a non-specific pore that enables free passage of the mitochondrial membranes to solutes of up to 1.5 kDa, and which contributes to cell death. It is however unclear if SLC25A4/ANT1 constitutes a pore-forming component of mPTP or regulates it. Acts as a regulator of mitophagy independently of ADP:ATP antiporter activity: promotes mitophagy via interaction with TIMM44, leading to inhibit the presequence translocase TIMM23, thereby promoting stabilization of PINK1. The protein is ADP/ATP translocase 1 of Homo sapiens (Human).